A 386-amino-acid polypeptide reads, in one-letter code: Patatin-14 (386 aa).

The signal sequence occupies residues 1-23 (MATTKSFLILFFMILATTSSTCA). The region spanning 32 to 229 (LSIDGGGIKG…TVGDPALLSL (198 aa)) is the PNPLA domain. The GXGXXG signature appears at 36-41 (GGGIKG). Residues 75 to 79 (GTSTG) carry the GXSXG motif. Ser77 (nucleophile) is an active-site residue. Asn115 is a glycosylation site (N-linked (GlcNAc...) asparagine). The active-site Proton acceptor is the Asp215. The short motif at 215-217 (DGG) is the DGA/G element. Residues 321–381 (ENALTGTTTE…LLSDRKKLRA (61 aa)) are a coiled coil.

It belongs to the patatin family. In terms of tissue distribution, tuber.

It localises to the vacuole. Its function is as follows. Probable lipolytic acyl hydrolase (LAH), an activity which is thought to be involved in the response of tubers to pathogens. In Solanum tuberosum (Potato), this protein is Patatin-14.